The sequence spans 212 residues: Thymidylate kinase (212 aa).

An ATP-binding site is contributed by 10–17 (GLEGAGKT).

Belongs to the thymidylate kinase family.

The catalysed reaction is dTMP + ATP = dTDP + ADP. In terms of biological role, phosphorylation of dTMP to form dTDP in both de novo and salvage pathways of dTTP synthesis. This is Thymidylate kinase from Yersinia pseudotuberculosis serotype O:1b (strain IP 31758).